The sequence spans 625 residues: tRNA-guanine(15) transglycosylase (625 aa).

The active-site Nucleophile is D86. D121 and G184 together coordinate substrate. Residues 546–621 (GLRVVVDDES…VAVKVHEGVN (76 aa)) enclose the PUA domain.

The protein belongs to the archaeosine tRNA-ribosyltransferase family. Zn(2+) serves as cofactor.

It catalyses the reaction guanosine(15) in tRNA + 7-cyano-7-deazaguanine = 7-cyano-7-carbaguanosine(15) in tRNA + guanine. It participates in tRNA modification; archaeosine-tRNA biosynthesis. Functionally, exchanges the guanine residue with 7-cyano-7-deazaguanine (preQ0) at position 15 in the dihydrouridine loop (D-loop) of archaeal tRNAs. This chain is tRNA-guanine(15) transglycosylase, found in Picrophilus torridus (strain ATCC 700027 / DSM 9790 / JCM 10055 / NBRC 100828 / KAW 2/3).